The primary structure comprises 296 residues: tRNA uridine(34) hydroxylase (296 aa).

One can recognise a Rhodanese domain in the interval 130-225 (RGDDVVFFDG…YGEAYGNDGY (96 aa)). The active-site Cysteine persulfide intermediate is Cys-185.

The protein belongs to the TrhO family.

It carries out the reaction uridine(34) in tRNA + AH2 + O2 = 5-hydroxyuridine(34) in tRNA + A + H2O. Its function is as follows. Catalyzes oxygen-dependent 5-hydroxyuridine (ho5U) modification at position 34 in tRNAs. The protein is tRNA uridine(34) hydroxylase of Corynebacterium kroppenstedtii (strain DSM 44385 / JCM 11950 / CIP 105744 / CCUG 35717).